The sequence spans 445 residues: 6-phosphogluconate dehydrogenase, decarboxylating (445 aa).

Residues 1–4 (AVMG), 22–24 (NRS), 63–65 (VKA), and N91 each bind NADP(+). Residues N91 and 117 to 119 (SGG) contribute to the substrate site. K172 (proton acceptor) is an active-site residue. A substrate-binding site is contributed by 175–176 (HN). E179 functions as the Proton donor in the catalytic mechanism. Positions 180, 249, 276, 434, and 440 each coordinate substrate.

This sequence belongs to the 6-phosphogluconate dehydrogenase family. In terms of assembly, homodimer.

It catalyses the reaction 6-phospho-D-gluconate + NADP(+) = D-ribulose 5-phosphate + CO2 + NADPH. It functions in the pathway carbohydrate degradation; pentose phosphate pathway; D-ribulose 5-phosphate from D-glucose 6-phosphate (oxidative stage): step 3/3. Its function is as follows. Catalyzes the oxidative decarboxylation of 6-phosphogluconate to ribulose 5-phosphate and CO(2), with concomitant reduction of NADP to NADPH. The sequence is that of 6-phosphogluconate dehydrogenase, decarboxylating (gnd) from Shigella dysenteriae.